The following is a 243-amino-acid chain: uncharacterized protein (243 aa).

Residues 157–181 are disordered; sequence SEETKEQPDATTSEKSRSPECPKTT.

This is an uncharacterized protein from Rattus norvegicus (Rat).